The following is an 88-amino-acid chain: MSRSLRKGPFVDHHLLKKVRAMNIEEKKTPIKTWSRRSMITPEMIGHTFEVHNGKKFLTVFVSETMVGHKLGEFSPTRIFKSHPVKKG.

This sequence belongs to the universal ribosomal protein uS19 family.

In terms of biological role, protein S19 forms a complex with S13 that binds strongly to the 16S ribosomal RNA. In Chlamydia pneumoniae (Chlamydophila pneumoniae), this protein is Small ribosomal subunit protein uS19 (rpsS).